A 669-amino-acid polypeptide reads, in one-letter code: Diacylglycerol lipase-beta (669 aa).

Residues 1–17 lie on the Cytoplasmic side of the membrane; that stretch reads MPGMVLFGRRWSLASDD. Residues 18-38 traverse the membrane as a helical segment; that stretch reads LVFPGSFELFLRVLWWIVSLT. The Extracellular portion of the chain corresponds to 39–58; that stretch reads LYLTHRRRLDCPGGVLLSTY. Residues 59–79 traverse the membrane as a helical segment; it reads LIVLLVLLAVIICTVLAIVCV. Residues 80–102 lie on the Cytoplasmic side of the membrane; that stretch reads SMRGTICNPGPRKSMSKLLYIRL. The helical transmembrane segment at 103–123 threads the bilayer; sequence ALFLPEMVWASLGAAWVAKGI. At 124–128 the chain is on the extracellular side; it reads QCDRT. Residues 129–149 form a helical membrane-spanning segment; the sequence is VVIGIIATVIVSWIVIAATMV. Residues 150 to 669 lie on the Cytoplasmic side of the membrane; sequence TIIFVFDPLG…CPGQGGSSVP (520 aa). Catalysis depends on charge relay system residues serine 443 and aspartate 495. A phosphoserine mark is found at serine 570, serine 578, and serine 582.

The protein belongs to the AB hydrolase superfamily. Lipase family. Ca(2+) is required as a cofactor. In terms of tissue distribution, expressed in liver and immune cells such as macrophages and microglias. In embryonic brains present in axonal tracts, while in adults localizes to dendritic fields, correlating with the developmental change in requirement for 2-AG synthesis from the pre- to the postsynaptic compartment (at protein level).

It localises to the cell membrane. It catalyses the reaction a 1,2-diacyl-sn-glycerol + H2O = a 2-acylglycerol + a fatty acid + H(+). The catalysed reaction is 1-octadecanoyl-2-(5Z,8Z,11Z,14Z-eicosatetraenoyl)-sn-glycerol + H2O = 2-(5Z,8Z,11Z,14Z-eicosatetraenoyl)-glycerol + octadecanoate + H(+). It carries out the reaction 1,2-di-(9Z-octadecenoyl)-sn-glycerol + H2O = 2-(9Z-octadecenoyl)-glycerol + (9Z)-octadecenoate + H(+). The enzyme catalyses 1-(9Z-octadecenoyl)-2-(5Z,8Z,11Z,14Z-eicosatetraenoyl)-sn-glycerol + H2O = 2-(5Z,8Z,11Z,14Z-eicosatetraenoyl)-glycerol + (9Z)-octadecenoate + H(+). It catalyses the reaction 1-(9Z-octadecenoyl)-2-octadecanoyl-sn-glycerol + H2O = 2-octadecanoylglycerol + (9Z)-octadecenoate + H(+). The catalysed reaction is 1-(9Z-octadecenoyl)-2-(9Z,12Z-octadecadienoyl)-sn-glycerol + H2O = 2-(9Z,12Z-octadecadienoyl)-glycerol + (9Z)-octadecenoate + H(+). It carries out the reaction 1-(9Z-octadecenoyl)-2-O-(5Z,8Z,11Z,14Z-eicosatetraenyl)-sn-glycerol + H2O = 2-O-(5Z,8Z,11Z,14Z)-eicosatetraenylglycerol + (9Z)-octadecenoate + H(+). The enzyme catalyses a triacylglycerol + H2O = a diacylglycerol + a fatty acid + H(+). It catalyses the reaction 1,2,3-tri-(5Z,8Z,11Z,14Z-eicosatetraenoyl)-glycerol + H2O = 1,2-di-(5Z,8Z,11Z,14Z-eicosatetraenoyl)-glycerol + (5Z,8Z,11Z,14Z)-eicosatetraenoate + H(+). The catalysed reaction is 1,2,3-(4Z,7Z,10Z,13Z,16Z,19Z-docosahexaenoyl)-glycerol + H2O = 1,2-di-(4Z,7Z,10Z,13Z,16Z,19Z-docosahexaenoyl)-glycerol + (4Z,7Z,10Z,13Z,16Z,19Z)-docosahexaenoate + H(+). With respect to regulation, inhibited by the 1,2,3-triazole urea covalent inhibitors KT109 and KT172. Inhibited by p-hydroxy-mercuri-benzoate and HgCl(2), but not by PMSF. Also inhibited by RHC80267, a drug that blocks 2-AG formation. In terms of biological role, lipase that catalyzes the hydrolysis of arachidonic acid (AA)-esterified diacylglycerols (DAGs) to produce the principal endocannabinoid, 2-arachidonoylglycerol (2-AG) which can be further cleaved by downstream enzymes to release arachidonic acid (AA) for cyclooxygenase (COX)-mediated eicosanoid production. Preferentially hydrolyzes DAGs at the sn-1 position in a calcium-dependent manner and has negligible activity against other lipids including monoacylglycerols and phospholipids. Plays a key role in the regulation of 2-AG and AA pools utilized by COX1/2 to generate lipid mediators of macrophage and microglia inflammatory responses. Also functions as a polyunsaturated fatty acids-specific triacylglycerol lipase in macrophages. Plays an important role to support the metabolic and signaling demands of macrophages. This Mus musculus (Mouse) protein is Diacylglycerol lipase-beta (Daglb).